We begin with the raw amino-acid sequence, 257 residues long: Phosphonates import ATP-binding protein PhnC (257 aa).

An ABC transporter domain is found at 2–246 (IEFRNVSKVY…KFAEIYGDVV (245 aa)). ATP is bound at residue 35 to 42 (GLSGAGKS).

It belongs to the ABC transporter superfamily. Phosphonates importer (TC 3.A.1.9.1) family. In terms of assembly, the complex is composed of two ATP-binding proteins (PhnC), two transmembrane proteins (PhnE) and a solute-binding protein (PhnD).

The protein localises to the cell membrane. The catalysed reaction is phosphonate(out) + ATP + H2O = phosphonate(in) + ADP + phosphate + H(+). In terms of biological role, part of the ABC transporter complex PhnCDE involved in phosphonates import. Responsible for energy coupling to the transport system. This is Phosphonates import ATP-binding protein PhnC from Bacillus anthracis.